Reading from the N-terminus, the 284-residue chain is D-tagatose-1,6-bisphosphate aldolase subunit GatY (284 aa).

Aspartate 82 serves as the catalytic Proton donor. Zn(2+) contacts are provided by histidine 83 and histidine 180. Dihydroxyacetone phosphate is bound at residue glycine 181. Histidine 208 is a Zn(2+) binding site. Dihydroxyacetone phosphate-binding positions include 209–211 (GAS) and 230–233 (NVAT).

Belongs to the class II fructose-bisphosphate aldolase family. TagBP aldolase GatY subfamily. In terms of assembly, forms a complex with GatZ. Zn(2+) is required as a cofactor.

The catalysed reaction is D-tagatofuranose 1,6-bisphosphate = D-glyceraldehyde 3-phosphate + dihydroxyacetone phosphate. The protein operates within carbohydrate metabolism; D-tagatose 6-phosphate degradation; D-glyceraldehyde 3-phosphate and glycerone phosphate from D-tagatose 6-phosphate: step 2/2. In terms of biological role, catalytic subunit of the tagatose-1,6-bisphosphate aldolase GatYZ, which catalyzes the reversible aldol condensation of dihydroxyacetone phosphate (DHAP or glycerone-phosphate) with glyceraldehyde 3-phosphate (G3P) to produce tagatose 1,6-bisphosphate (TBP). Requires GatZ subunit for full activity and stability. Is involved in the catabolism of galactitol. The chain is D-tagatose-1,6-bisphosphate aldolase subunit GatY from Escherichia coli O6:K15:H31 (strain 536 / UPEC).